A 557-amino-acid chain; its full sequence is Formate--tetrahydrofolate ligase (557 aa).

Residue 65 to 72 participates in ATP binding; it reads TPAGEGKT.

It belongs to the formate--tetrahydrofolate ligase family.

The enzyme catalyses (6S)-5,6,7,8-tetrahydrofolate + formate + ATP = (6R)-10-formyltetrahydrofolate + ADP + phosphate. Its pathway is one-carbon metabolism; tetrahydrofolate interconversion. The sequence is that of Formate--tetrahydrofolate ligase from Methylorubrum populi (strain ATCC BAA-705 / NCIMB 13946 / BJ001) (Methylobacterium populi).